The chain runs to 314 residues: Lipid A biosynthesis acyltransferase 2 (314 aa).

The helical transmembrane segment at 17–37 threads the bilayer; sequence LSPVYWFTWFVLGMIAGISMF. Residues 137 to 142 carry the HXXXXD motif motif; that stretch reads HGWSVD.

This sequence belongs to the LpxL/LpxM/LpxP family. LpxM subfamily.

Its subcellular location is the cell inner membrane. It catalyses the reaction an alpha-Kdo-(2-&gt;4)-alpha-Kdo-(2-&gt;6)-(acyl)-lipid IVA + a fatty acyl-[ACP] = an alpha-Kdo-(2-&gt;4)-alpha-Kdo-(2-&gt;6)-lipid A + holo-[ACP]. The protein operates within glycolipid biosynthesis; KDO(2)-lipid A biosynthesis; KDO(2)-lipid A from CMP-3-deoxy-D-manno-octulosonate and lipid IV(A): step 4/4. Its pathway is bacterial outer membrane biogenesis; lipopolysaccharide biosynthesis. In terms of biological role, catalyzes the transfer of an acyl chain from an acyl-[acyl-carrier-protein] (ACP) to a Kdo(2)-(acyl)-lipid IV(A) to form a Kdo(2)-lipid A. The polypeptide is Lipid A biosynthesis acyltransferase 2 (Shigella flexneri).